The chain runs to 245 residues: MIIPALDLIDGTVVRLHQGDYGKQRDYGNDPLPRLQDYAAQGAEVLHLVDLTGAKDPAKRQIPLIKTLVAGVNVPVQVGGGVRSEEDVAALLEAGVARVVVGSTAVKSPDVVKGWFERFGADALVLALDVRIDEQGNKQVAVSGWQENSGVSLEQLVETYLPVGLKHVLCTDISRDGTLAGSNVSLYEEVCARYPQVAFQSSGGIGDINDVAALRGTGVRGVIVGRALLEGKFTVKEAIACWQNA.

Asp-7 functions as the Proton acceptor in the catalytic mechanism. Asp-129 (proton donor) is an active-site residue.

It belongs to the HisA/HisF family.

Its subcellular location is the cytoplasm. It carries out the reaction 1-(5-phospho-beta-D-ribosyl)-5-[(5-phospho-beta-D-ribosylamino)methylideneamino]imidazole-4-carboxamide = 5-[(5-phospho-1-deoxy-D-ribulos-1-ylimino)methylamino]-1-(5-phospho-beta-D-ribosyl)imidazole-4-carboxamide. It functions in the pathway amino-acid biosynthesis; L-histidine biosynthesis; L-histidine from 5-phospho-alpha-D-ribose 1-diphosphate: step 4/9. In Shigella flexneri serotype 5b (strain 8401), this protein is 1-(5-phosphoribosyl)-5-[(5-phosphoribosylamino)methylideneamino] imidazole-4-carboxamide isomerase.